The sequence spans 244 residues: tRNA pseudouridine synthase A 2 (244 aa).

The Nucleophile role is filled by D52. A substrate-binding site is contributed by Y110.

It belongs to the tRNA pseudouridine synthase TruA family. In terms of assembly, homodimer.

It catalyses the reaction uridine(38/39/40) in tRNA = pseudouridine(38/39/40) in tRNA. Its function is as follows. Formation of pseudouridine at positions 38, 39 and 40 in the anticodon stem and loop of transfer RNAs. This is tRNA pseudouridine synthase A 2 from Clostridium perfringens (strain 13 / Type A).